A 355-amino-acid polypeptide reads, in one-letter code: Phosphatidylinositol:ceramide inositolphosphotransferase (355 aa).

The Cytoplasmic portion of the chain corresponds to 1–44 (MISYPFFSLSPPGLVPPPMAVPPVEMYSGSFWNRMRKPLPLRTQ). The chain crosses the membrane as a helical span at residues 45–65 (VIRFTVVFVIVSFILAVALQI). The Extracellular segment spans residues 66–89 (THERMPDPKVTKPLPDLGFELLTK). A helical membrane pass occupies residues 90 to 110 (ISFLSVVTDVLIAFLSSLSFF). The Cytoplasmic portion of the chain corresponds to 111–165 (TLWKLYLLHRHCVGSGEPELPCNIPGVSRFFLSVWLCKENCRIELRNVHTIAWIR). A helical transmembrane segment spans residues 166–186 (FITSYALLLLFRSLVIVMTSM). The Extracellular portion of the chain corresponds to 187–205 (PTPVDKCQNPPKIENPVKN). The chain crosses the membrane as a helical span at residues 206–226 (VILTVLTAGGGSIHCGDLMYS). At 227–251 (GHTVILTLHLMFHWIYGAMVHWSFR) the chain is on the cytoplasmic side. Active-site residues include histidine 228, histidine 271, and aspartate 275. A helical membrane pass occupies residues 252–272 (PVVTVVAIFGYYCIVASRSHY). Topologically, residues 273-275 (TDD) are extracellular. A helical transmembrane segment spans residues 276 to 296 (VLVAIYLTIATFIAVGHNADG). The Cytoplasmic portion of the chain corresponds to 297–355 (APWQLQLFIRWLPCCGANSREVTEDSQPVMVAFKSEAVDELRERDDSAGLSCEVSTNEV).

This sequence belongs to the sphingomyelin synthase family.

The protein resides in the membrane. Functionally, bidirectional lipid inositolphosphotransferase capable of converting phosphatidylinositol (PI) and ceramide to inositol-phosphorylceramide (IPC) and diacylglycerol (DAG) and vice versa. Direction is dependent on the relative concentrations of DAG and ceramide as phosphoinositol acceptors. Does not function strictly as a SM synthase. Essential for viability of the pathogenic bloodstream stage of this human protozoan parasite and, consequently, can be considered as potential drug target. The sequence is that of Phosphatidylinositol:ceramide inositolphosphotransferase from Trypanosoma brucei brucei (strain 927/4 GUTat10.1).